Here is a 291-residue protein sequence, read N- to C-terminus: 33 kDa chaperonin (291 aa).

Disulfide bonds link Cys-237–Cys-239 and Cys-270–Cys-273.

It belongs to the HSP33 family. Under oxidizing conditions two disulfide bonds are formed involving the reactive cysteines. Under reducing conditions zinc is bound to the reactive cysteines and the protein is inactive.

The protein resides in the cytoplasm. Redox regulated molecular chaperone. Protects both thermally unfolding and oxidatively damaged proteins from irreversible aggregation. Plays an important role in the bacterial defense system toward oxidative stress. This chain is 33 kDa chaperonin, found in Bacillus cereus (strain G9842).